The primary structure comprises 594 residues: RAS guanyl-releasing protein 2-B (594 aa).

In terms of domain architecture, N-terminal Ras-GEF spans 3–121 (SSDLDKGLTI…SLIDIESVPS (119 aa)). The region spanning 149–382 (DPAELAEHLT…YQLSLQREPR (234 aa)) is the Ras-GEF domain. The segment at 377–403 (LQREPRARSTQTHAKSPPSPSPPLEEW) is disordered. EF-hand domains are found at residues 418 to 453 (HIEK…FPYL) and 455 to 482 (AFNE…ASSV). Positions 431, 433, 435, 437, 442, 460, 462, 464, 466, and 471 each coordinate Ca(2+). The segment at 490–540 (IHNFAERTFLRPVSCQHCRNLILGIYKKGLKCKACGITCHKHCRDHLSIEC) adopts a Phorbol-ester/DAG-type zinc-finger fold.

It belongs to the RASGRP family.

The protein localises to the cytoplasm. The protein resides in the cytosol. It localises to the cell membrane. Its subcellular location is the synapse. It is found in the synaptosome. Its function is as follows. Functions as a calcium- and DAG-regulated nucleotide exchange factor specifically activating Rap through the exchange of bound GDP for GTP. May function in cell aggregation and adhesion. The protein is RAS guanyl-releasing protein 2-B (rasgrp2-b) of Xenopus laevis (African clawed frog).